Consider the following 632-residue polypeptide: tRNA uridine 5-carboxymethylaminomethyl modification enzyme MnmG (632 aa).

FAD-binding positions include 13 to 18 (GGGHAG), valine 125, and serine 180. 273-287 (GPRYCPSIEDKVMRF) is an NAD(+) binding site. An FAD-binding site is contributed by glutamine 370.

Belongs to the MnmG family. As to quaternary structure, homodimer. Heterotetramer of two MnmE and two MnmG subunits. It depends on FAD as a cofactor.

It localises to the cytoplasm. Functionally, NAD-binding protein involved in the addition of a carboxymethylaminomethyl (cmnm) group at the wobble position (U34) of certain tRNAs, forming tRNA-cmnm(5)s(2)U34. This is tRNA uridine 5-carboxymethylaminomethyl modification enzyme MnmG from Vibrio vulnificus (strain CMCP6).